The following is a 570-amino-acid chain: Glycine--tRNA ligase (570 aa).

Positions 99 and 165 each coordinate substrate. ATP is bound by residues R197–E199, L207–F212, E324–C325, and G443–R446. F212–E216 is a substrate binding site. E439 to G443 is a binding site for substrate.

The protein belongs to the class-II aminoacyl-tRNA synthetase family.

It localises to the cytoplasm. It catalyses the reaction tRNA(Gly) + glycine + ATP = glycyl-tRNA(Gly) + AMP + diphosphate. In terms of biological role, catalyzes the attachment of glycine to tRNA(Gly). This Thermococcus kodakarensis (strain ATCC BAA-918 / JCM 12380 / KOD1) (Pyrococcus kodakaraensis (strain KOD1)) protein is Glycine--tRNA ligase.